Reading from the N-terminus, the 455-residue chain is MRSEWVARRRGQANVTQMHFARQGVITEEMEYVAQRENLPPELIRSEVARGRMIIPANINHTNLEPMCIGIASRCKVNANIGASPTSSGLAEELEKLKLAIKYGADTVMDLSTGGGDLDEIRTAIIQASPVPIGTVPIYQALESVHGKVEKLSAEDILHVIEKQAQQGVDYMTIHAGILIEYLPLVRHRLTGIVSRGGGILARWMLAHHKQNPLYTHFRDIIEIFKKYDVSFSLGDSLRPGCLHDASDEAQLAELKTLGQLTRMAWEHDVQVMVEGPGHVPMDQIEFNVRKQMEECDEAPFYVLGPLVTDIAAGYDHISSAIGAALAGWYGAAMLCYVTPKEHLGLPNAEDVRNGLIAYKIAAHAADIARHRPGARDRDDEMSRARYNFDWNRQFELSLDPERAREYHDETLPADIYKTAEFCSMCGPKFCPMQTKMDAEALSELEQFLAAQPTG.

Residues asparagine 80, methionine 109, tyrosine 139, histidine 175, 195–197 (SRG), 236–239 (DSLR), and glutamate 275 each bind substrate. Position 279 (histidine 279) interacts with Zn(2+). Tyrosine 302 contacts substrate. Histidine 343 is a Zn(2+) binding site. [4Fe-4S] cluster-binding residues include cysteine 423, cysteine 426, and cysteine 431.

This sequence belongs to the ThiC family. [4Fe-4S] cluster is required as a cofactor.

The catalysed reaction is 5-amino-1-(5-phospho-beta-D-ribosyl)imidazole + S-adenosyl-L-methionine = 4-amino-2-methyl-5-(phosphooxymethyl)pyrimidine + CO + 5'-deoxyadenosine + formate + L-methionine + 3 H(+). Its pathway is cofactor biosynthesis; thiamine diphosphate biosynthesis. In terms of biological role, catalyzes the synthesis of the hydroxymethylpyrimidine phosphate (HMP-P) moiety of thiamine from aminoimidazole ribotide (AIR) in a radical S-adenosyl-L-methionine (SAM)-dependent reaction. The chain is Phosphomethylpyrimidine synthase from Synechococcus sp. (strain JA-2-3B'a(2-13)) (Cyanobacteria bacterium Yellowstone B-Prime).